We begin with the raw amino-acid sequence, 345 residues long: Trace amine-associated receptor 6 (345 aa).

The Extracellular portion of the chain corresponds to Met1 to Arg32. Residue Asn19 is glycosylated (N-linked (GlcNAc...) asparagine). Intrachain disulfides connect Cys22-Cys186 and Cys105-Cys190. A helical membrane pass occupies residues Val33–Val53. Residues Met54–Asn68 are Cytoplasmic-facing. A helical transmembrane segment spans residues Phe69–Ser89. At Met90–Phe107 the chain is on the extracellular side. A helical membrane pass occupies residues His108 to Ile128. Topologically, residues Asp129–Ser147 are cytoplasmic. Residues Val148 to Phe168 traverse the membrane as a helical segment. Topologically, residues Tyr169–Asp202 are extracellular. The chain crosses the membrane as a helical span at residues Phe203–Val223. Topologically, residues Ala224 to Thr259 are cytoplasmic. A helical membrane pass occupies residues Leu260–Ile276. Over Asp277–Ala282 the chain is Extracellular. Residues Phe283–Tyr302 traverse the membrane as a helical segment. At Asn303–Ile345 the chain is on the cytoplasmic side.

This sequence belongs to the G-protein coupled receptor 1 family.

Its subcellular location is the cell membrane. Its function is as follows. Olfactory receptor specific for trace amines, such as beta-phenylethylamine (beta-PEA). Trace amine compounds are enriched in animal body fluids and act on trace amine-associated receptors (TAARs) to elicit both intraspecific and interspecific innate behaviors. Beta-PEA-binding causes a conformation change that triggers signaling via G(s)-class of G alpha proteins (GNAL or GNAS). The sequence is that of Trace amine-associated receptor 6 (Taar6) from Rattus norvegicus (Rat).